The following is a 630-amino-acid chain: DNA mismatch repair protein MutL (630 aa).

Disordered stretches follow at residues 361–386 and 407–431; these read VLSSDIGGGEDATAPLAPLTGDAPAE and FERKQEEEVGEERCSPRLPTDGQAE. Positions 407 to 421 are enriched in basic and acidic residues; the sequence is FERKQEEEVGEERCS.

The protein belongs to the DNA mismatch repair MutL/HexB family.

This protein is involved in the repair of mismatches in DNA. It is required for dam-dependent methyl-directed DNA mismatch repair. May act as a 'molecular matchmaker', a protein that promotes the formation of a stable complex between two or more DNA-binding proteins in an ATP-dependent manner without itself being part of a final effector complex. In Geobacillus kaustophilus (strain HTA426), this protein is DNA mismatch repair protein MutL.